The following is a 643-amino-acid chain: Threonine--tRNA ligase (643 aa).

The region spanning 1 to 61 is the TGS domain; sequence MPIITLPDGS…EQDATLEIIT (61 aa). Positions 243 to 534 are catalytic; it reads DHRKIGKALD…ITEEYAGFFP (292 aa). Zn(2+)-binding residues include cysteine 334, histidine 385, and histidine 511.

The protein belongs to the class-II aminoacyl-tRNA synthetase family. In terms of assembly, homodimer. The cofactor is Zn(2+).

Its subcellular location is the cytoplasm. It carries out the reaction tRNA(Thr) + L-threonine + ATP = L-threonyl-tRNA(Thr) + AMP + diphosphate + H(+). Catalyzes the attachment of threonine to tRNA(Thr) in a two-step reaction: L-threonine is first activated by ATP to form Thr-AMP and then transferred to the acceptor end of tRNA(Thr). Also edits incorrectly charged L-seryl-tRNA(Thr). This chain is Threonine--tRNA ligase, found in Haemophilus influenzae (strain ATCC 51907 / DSM 11121 / KW20 / Rd).